Here is a 145-residue protein sequence, read N- to C-terminus: Deoxyuridine 5'-triphosphate nucleotidohydrolase (145 aa).

Substrate is bound by residues 64–66 (RSG), Asn-77, 81–83 (TID), and Met-91.

This sequence belongs to the dUTPase family. Mg(2+) is required as a cofactor.

It carries out the reaction dUTP + H2O = dUMP + diphosphate + H(+). It functions in the pathway pyrimidine metabolism; dUMP biosynthesis; dUMP from dCTP (dUTP route): step 2/2. In terms of biological role, this enzyme is involved in nucleotide metabolism: it produces dUMP, the immediate precursor of thymidine nucleotides and it decreases the intracellular concentration of dUTP so that uracil cannot be incorporated into DNA. This is Deoxyuridine 5'-triphosphate nucleotidohydrolase from Leptospira borgpetersenii serovar Hardjo-bovis (strain JB197).